We begin with the raw amino-acid sequence, 101 residues long: Urease subunit beta (101 aa).

Belongs to the urease beta subunit family. As to quaternary structure, heterotrimer of UreA (gamma), UreB (beta) and UreC (alpha) subunits. Three heterotrimers associate to form the active enzyme.

Its subcellular location is the cytoplasm. The enzyme catalyses urea + 2 H2O + H(+) = hydrogencarbonate + 2 NH4(+). It participates in nitrogen metabolism; urea degradation; CO(2) and NH(3) from urea (urease route): step 1/1. This Sinorhizobium medicae (strain WSM419) (Ensifer medicae) protein is Urease subunit beta.